Here is a 198-residue protein sequence, read N- to C-terminus: MSFPRVGVLALQGDTREHLTALREAGADSMPVRRRGELDEVDALVIPGGESTTISHLLLDCELLEPLRARLADGLPAYGACTGMILLASEILDAGVCGREALPLGAIDITVRRNAFGRQVDSFEGDIGFAGLVDPVRAVFIRAPWVERAGDGVQVLAQAAGHAVAVRQGSMLATAFHPEMTSDRRIHQLFVDIVNGIA.

Position 49 to 51 (49 to 51 (GES)) interacts with L-glutamine. Residue C81 is the Nucleophile of the active site. L-glutamine-binding positions include R113 and 141 to 142 (IR). Residues H177 and E179 each act as charge relay system in the active site.

Belongs to the glutaminase PdxT/SNO family. As to quaternary structure, in the presence of PdxS, forms a dodecamer of heterodimers. Only shows activity in the heterodimer.

It catalyses the reaction aldehydo-D-ribose 5-phosphate + D-glyceraldehyde 3-phosphate + L-glutamine = pyridoxal 5'-phosphate + L-glutamate + phosphate + 3 H2O + H(+). The catalysed reaction is L-glutamine + H2O = L-glutamate + NH4(+). The protein operates within cofactor biosynthesis; pyridoxal 5'-phosphate biosynthesis. Catalyzes the hydrolysis of glutamine to glutamate and ammonia as part of the biosynthesis of pyridoxal 5'-phosphate. The resulting ammonia molecule is channeled to the active site of PdxS. The protein is Pyridoxal 5'-phosphate synthase subunit PdxT of Mycobacterium leprae (strain TN).